The sequence spans 119 residues: Small ribosomal subunit protein eS25 (119 aa).

Residues 1 to 42 form a disordered region; sequence MPPKKDTKASAKQPQKTQKKKEGSGGGKAKKKKWSKGKVRDK. The span at 28–37 shows a compositional bias: basic residues; it reads KAKKKKWSKG.

Belongs to the eukaryotic ribosomal protein eS25 family.

The protein is Small ribosomal subunit protein eS25 (RpS25) of Spodoptera frugiperda (Fall armyworm).